Consider the following 296-residue polypeptide: Glycine N-acyltransferase (296 aa).

Lys-16 carries the post-translational modification N6-acetyllysine; alternate. At Lys-16 the chain carries N6-succinyllysine; alternate. The residue at position 113 (Lys-113) is an N6-acetyllysine. Lys-127, Lys-141, and Lys-142 each carry N6-acetyllysine; alternate. N6-succinyllysine; alternate is present on residues Lys-127, Lys-141, and Lys-142. N6-acetyllysine occurs at positions 159 and 167. At Lys-169 the chain carries N6-succinyllysine. An N6-acetyllysine; alternate mark is found at Lys-183 and Lys-256. Residues Lys-183 and Lys-256 each carry the N6-succinyllysine; alternate modification. Lys-267 is modified (N6-succinyllysine).

It belongs to the glycine N-acyltransferase family.

The protein localises to the mitochondrion. The enzyme catalyses an acyl-CoA + glycine = an N-acylglycine + CoA + H(+). The catalysed reaction is benzoyl-CoA + glycine = N-benzoylglycine + CoA + H(+). In terms of biological role, mitochondrial acyltransferase which transfers an acyl group to the N-terminus of glycine and glutamine, although much less efficiently. Can conjugate a multitude of substrates to form a variety of N-acylglycines, thereby detoxify xenobiotics, such as benzoic acid or salicylic acid, and endogenous organic acids, such as isovaleric acid. The chain is Glycine N-acyltransferase (Glyat) from Mus musculus (Mouse).